Consider the following 502-residue polypeptide: Lysine--tRNA ligase (502 aa).

E411 and E418 together coordinate Mg(2+).

Belongs to the class-II aminoacyl-tRNA synthetase family. Homodimer. Mg(2+) serves as cofactor.

The protein localises to the cytoplasm. It catalyses the reaction tRNA(Lys) + L-lysine + ATP = L-lysyl-tRNA(Lys) + AMP + diphosphate. The sequence is that of Lysine--tRNA ligase from Chromohalobacter salexigens (strain ATCC BAA-138 / DSM 3043 / CIP 106854 / NCIMB 13768 / 1H11).